A 623-amino-acid chain; its full sequence is Transketolase (623 aa).

Met-1 is subject to N-acetylmethionine. Lys-6 and Lys-11 each carry N6-acetyllysine. Residue His-37 participates in substrate binding. Ser-40 and His-77 together coordinate thiamine diphosphate. Ser-104 bears the Phosphoserine mark. Thiamine diphosphate is bound at residue Gly-123–Leu-125. Position 144 is an N6-acetyllysine (Lys-144). Residue Asp-155 coordinates Mg(2+). Residues Gly-156 and Asn-185 each coordinate thiamine diphosphate. 2 residues coordinate Mg(2+): Asn-185 and Leu-187. An N6-acetyllysine mark is found at Lys-204, Lys-232, and Lys-241. Thiamine diphosphate is bound by residues Lys-244 and His-258. His-258 contacts substrate. N6-acetyllysine is present on Lys-260. Position 275 is a phosphotyrosine (Tyr-275). Thr-287 carries the post-translational modification Phosphothreonine. Residue Ser-295 is modified to Phosphoserine. Substrate is bound by residues Arg-318 and Ser-345. Phosphoserine is present on Ser-345. A Glycyl lysine isopeptide (Lys-Gly) (interchain with G-Cter in SUMO2) cross-link involves residue Lys-352. The Proton donor role is filled by Glu-366. Phe-392 serves as a coordination point for thiamine diphosphate. 2 residues coordinate substrate: His-416 and Asp-424. Gln-428 provides a ligand contact to thiamine diphosphate. Arg-474 serves as a coordination point for substrate. N6-acetyllysine occurs at positions 538 and 603.

It belongs to the transketolase family. In terms of assembly, homodimer. Mg(2+) serves as cofactor. Ca(2+) is required as a cofactor. Requires Mn(2+) as cofactor. The cofactor is Co(2+). It depends on thiamine diphosphate as a cofactor.

It catalyses the reaction D-sedoheptulose 7-phosphate + D-glyceraldehyde 3-phosphate = aldehydo-D-ribose 5-phosphate + D-xylulose 5-phosphate. Its function is as follows. Catalyzes the transfer of a two-carbon ketol group from a ketose donor to an aldose acceptor, via a covalent intermediate with the cofactor thiamine pyrophosphate. This chain is Transketolase (Tkt), found in Mus musculus (Mouse).